A 62-amino-acid chain; its full sequence is Photosystem II reaction center protein H (62 aa).

The helical transmembrane segment at 30-50 (PVMAGIGFMLLIFLVTILQIY) threads the bilayer.

This sequence belongs to the PsbH family. PSII is composed of 1 copy each of membrane proteins PsbA, PsbB, PsbC, PsbD, PsbE, PsbF, PsbH, PsbI, PsbJ, PsbK, PsbL, PsbM, PsbT, PsbX, PsbY, Psb30/Ycf12, peripheral proteins PsbO, CyanoQ (PsbQ), PsbU, PsbV and a large number of cofactors. It forms dimeric complexes.

The protein localises to the cellular thylakoid membrane. Its function is as follows. One of the components of the core complex of photosystem II (PSII), required for its stability and/or assembly. PSII is a light-driven water:plastoquinone oxidoreductase that uses light energy to abstract electrons from H(2)O, generating O(2) and a proton gradient subsequently used for ATP formation. It consists of a core antenna complex that captures photons, and an electron transfer chain that converts photonic excitation into a charge separation. This is Photosystem II reaction center protein H from Prochlorococcus marinus (strain MIT 9303).